The chain runs to 189 residues: Segregation and condensation protein B (189 aa).

The protein belongs to the ScpB family. As to quaternary structure, homodimer. Homodimerization may be required to stabilize the binding of ScpA to the Smc head domains. Component of a cohesin-like complex composed of ScpA, ScpB and the Smc homodimer, in which ScpA and ScpB bind to the head domain of Smc. The presence of the three proteins is required for the association of the complex with DNA.

The protein resides in the cytoplasm. In terms of biological role, participates in chromosomal partition during cell division. May act via the formation of a condensin-like complex containing Smc and ScpA that pull DNA away from mid-cell into both cell halves. This is Segregation and condensation protein B from Clostridium tetani (strain Massachusetts / E88).